A 345-amino-acid polypeptide reads, in one-letter code: uncharacterized protein (345 aa).

The protein belongs to the proline racemase family.

This is an uncharacterized protein from Bacillus anthracis.